Reading from the N-terminus, the 288-residue chain is MAIHSFRPLTPAGRFTSLNKREGLSKKRPQKALTEPKPKTGGRNVYGRITTRHIGGGHKQLYRIIDFKRDILDMPATVEALEYDPNRTSNLALVVYANGEKKYILAPEGLQVGAKIFASNKATTNDYNVGNNFPLHLIPPSTRVHAVELVPGRGAKIARAAGTGLELVAVEGDRATLKMPSGELRLVNAKCRATIGEVGNGDHNNQSLGKAGRRRWLGVRPTVRGMVMNPVDHPNGGGQGKSKGGGGRQQLVSPWGQLAKGFPTRRRSKQSNAQIIVHHNGRKPRGKK.

2 disordered regions span residues Met-1–Tyr-46 and Met-226–Lys-288. A compositionally biased stretch (gly residues) spans Asn-235 to Arg-248. The span at His-279–Lys-288 shows a compositional bias: basic residues.

It belongs to the universal ribosomal protein uL2 family. As to quaternary structure, part of the 50S ribosomal subunit. Forms a bridge to the 30S subunit in the 70S ribosome.

Functionally, one of the primary rRNA binding proteins. Required for association of the 30S and 50S subunits to form the 70S ribosome, for tRNA binding and peptide bond formation. It has been suggested to have peptidyltransferase activity; this is somewhat controversial. Makes several contacts with the 16S rRNA in the 70S ribosome. This is Large ribosomal subunit protein uL2 from Opitutus terrae (strain DSM 11246 / JCM 15787 / PB90-1).